The chain runs to 142 residues: UPF0102 protein PsycPRwf_0497 (142 aa).

Belongs to the UPF0102 family.

This chain is UPF0102 protein PsycPRwf_0497, found in Psychrobacter sp. (strain PRwf-1).